The sequence spans 314 residues: Protein OPG185 (314 aa).

A signal peptide spans 1 to 16 (MARLPILLLLISLVYS). Residues 17 to 121 (TPSPQTSKKI…NDTDKVDYEE (105 aa)) enclose the Ig-like V-type domain. Topologically, residues 17 to 278 (TPSPQTSKKI…SNYKTKDFVE (262 aa)) are virion surface. An intrachain disulfide couples Cys34 to Cys103. N-linked (GlcNAc...) asparagine; by host glycans are attached at residues Asn37, Asn38, Asn69, Asn112, and Asn161. The tract at residues 192 to 217 (NTVSTTSRESTTDETPEPITDKEEDH) is disordered. N-linked (GlcNAc...) asparagine; by host glycosylation is present at Asn253. A helical membrane pass occupies residues 279 to 302 (IFGITALIILSAVAIFCITYYICN). Residues 303-314 (KRSRKYKTENKV) lie on the Intravirion side of the membrane.

The protein belongs to the orthopoxvirus OPG185 family. As to quaternary structure, heterodimerizes with OPG040. The heterodimer OPG185-OPG040 interacts with components of the entry fusion complex OPG143 and OPG094. Heterodimer with C3/VPC protein; disulfide-linked. Post-translationally, glycosylated; contains phosphate and sulfate-substituted glycans. O-glycosylation is required for hemagglutination and hemadsorption activities of infected cell membranes.

It localises to the virion membrane. Its subcellular location is the host membrane. Its function is as follows. Prevents cell to cell fusion by interacting with and directing the viral OPG040 protein on the host plasma membrane. The OPG185-OPG040 complex associates with components of the entry fusion complex (EFC) presumably to avoid superinfection and syncytium formation. Via its interaction with C3/VCP protein, protects the infected cell and probably also the extracellular enveloped virus from complement attack. The polypeptide is Protein OPG185 (OPG185) (Bos taurus (Bovine)).